The chain runs to 346 residues: Carbamoyl phosphate synthase small chain (346 aa).

The tract at residues 1–160 is CPSase; it reads MEDGSVFAGR…SVKEPVLLGE (160 aa). Residues Ser39, Gly209, and Gly211 each coordinate L-glutamine. In terms of domain architecture, Glutamine amidotransferase type-1 spans 164-346; sequence CIGVVDCGVK…FLKLVERHGH (183 aa). Cys237 (nucleophile) is an active-site residue. Positions 238, 241, 280, 282, and 283 each coordinate L-glutamine. Residues His320 and Glu322 contribute to the active site.

It belongs to the CarA family. Composed of two chains; the small (or glutamine) chain promotes the hydrolysis of glutamine to ammonia, which is used by the large (or ammonia) chain to synthesize carbamoyl phosphate. Tetramer of heterodimers (alpha,beta)4.

It catalyses the reaction hydrogencarbonate + L-glutamine + 2 ATP + H2O = carbamoyl phosphate + L-glutamate + 2 ADP + phosphate + 2 H(+). The catalysed reaction is L-glutamine + H2O = L-glutamate + NH4(+). Its pathway is amino-acid biosynthesis; L-arginine biosynthesis; carbamoyl phosphate from bicarbonate: step 1/1. It participates in pyrimidine metabolism; UMP biosynthesis via de novo pathway; (S)-dihydroorotate from bicarbonate: step 1/3. In terms of biological role, small subunit of the glutamine-dependent carbamoyl phosphate synthetase (CPSase). CPSase catalyzes the formation of carbamoyl phosphate from the ammonia moiety of glutamine, carbonate, and phosphate donated by ATP, constituting the first step of 2 biosynthetic pathways, one leading to arginine and/or urea and the other to pyrimidine nucleotides. The small subunit (glutamine amidotransferase) binds and cleaves glutamine to supply the large subunit with the substrate ammonia. The polypeptide is Carbamoyl phosphate synthase small chain (Pyrobaculum aerophilum (strain ATCC 51768 / DSM 7523 / JCM 9630 / CIP 104966 / NBRC 100827 / IM2)).